We begin with the raw amino-acid sequence, 349 residues long: Small ribosomal subunit protein uS2 (349 aa).

The segment at 302-334 (QNNYDPSKRGYNPKYVNHKSTFNKFNNKKPVDS) is disordered.

Belongs to the universal ribosomal protein uS2 family.

In Ureaplasma parvum serovar 3 (strain ATCC 27815 / 27 / NCTC 11736), this protein is Small ribosomal subunit protein uS2.